Consider the following 229-residue polypeptide: Phosphoglycolate phosphatase (229 aa).

The active-site Nucleophile is aspartate 18. The Mg(2+) site is built by aspartate 18, aspartate 20, and aspartate 176.

Belongs to the HAD-like hydrolase superfamily. CbbY/CbbZ/Gph/YieH family. Requires Mg(2+) as cofactor.

The enzyme catalyses 2-phosphoglycolate + H2O = glycolate + phosphate. It functions in the pathway organic acid metabolism; glycolate biosynthesis; glycolate from 2-phosphoglycolate: step 1/1. Specifically catalyzes the dephosphorylation of 2-phosphoglycolate. Is involved in the dissimilation of the intracellular 2-phosphoglycolate formed during the DNA repair of 3'-phosphoglycolate ends, a major class of DNA lesions induced by oxidative stress. The polypeptide is Phosphoglycolate phosphatase (Xylella fastidiosa (strain 9a5c)).